Here is a 235-residue protein sequence, read N- to C-terminus: Sugar fermentation stimulation protein homolog (235 aa).

This sequence belongs to the SfsA family.

This Allorhizobium ampelinum (strain ATCC BAA-846 / DSM 112012 / S4) (Agrobacterium vitis (strain S4)) protein is Sugar fermentation stimulation protein homolog.